Consider the following 424-residue polypeptide: Dihydroorotase (424 aa).

Zn(2+) is bound by residues H61 and H63. Substrate-binding positions include 63 to 65 and N95; that span reads HLR. Positions 153, 180, and 233 each coordinate Zn(2+). N279 serves as a coordination point for substrate. D306 lines the Zn(2+) pocket. D306 is an active-site residue. Position 310 (H310) interacts with substrate.

It belongs to the metallo-dependent hydrolases superfamily. DHOase family. Class I DHOase subfamily. It depends on Zn(2+) as a cofactor.

It carries out the reaction (S)-dihydroorotate + H2O = N-carbamoyl-L-aspartate + H(+). The protein operates within pyrimidine metabolism; UMP biosynthesis via de novo pathway; (S)-dihydroorotate from bicarbonate: step 3/3. Functionally, catalyzes the reversible cyclization of carbamoyl aspartate to dihydroorotate. The chain is Dihydroorotase from Geobacter metallireducens (strain ATCC 53774 / DSM 7210 / GS-15).